The following is a 98-amino-acid chain: Protein translation factor SUI1 homolog (98 aa).

Belongs to the SUI1 family.

This is Protein translation factor SUI1 homolog from Pyrococcus furiosus (strain ATCC 43587 / DSM 3638 / JCM 8422 / Vc1).